A 167-amino-acid polypeptide reads, in one-letter code: Swarming motility protein SwrB (167 aa).

The disordered stretch occupies residues 63-105; sequence IENKASSASQSDEESQKSGLQTSETYQERDPVQEAENLPEHIE. A compositionally biased stretch (basic and acidic residues) spans 88–105; sequence YQERDPVQEAENLPEHIE.

Functionally, required for swarming motility and for maximal sigma-D activity. The protein is Swarming motility protein SwrB (swrB) of Bacillus subtilis (strain 168).